A 266-amino-acid chain; its full sequence is UPF0246 protein PHZ_c0561 (266 aa).

A disordered region spans residues 245-266 (DEEFTFARPQPPPPAASRNKED).

The protein belongs to the UPF0246 family.

This is UPF0246 protein PHZ_c0561 from Phenylobacterium zucineum (strain HLK1).